The following is a 335-amino-acid chain: Protein BIG1 (335 aa).

Positions 1 to 17 (MQTVLKYLLLIMCGSFC) are cleaved as a signal peptide. Topologically, residues 20–275 (EELQNQTNVP…FDSQLIENNR (256 aa)) are lumenal. 2 N-linked (GlcNAc...) asparagine glycosylation sites follow: asparagine 24 and asparagine 144. The chain crosses the membrane as a helical span at residues 276–296 (GLLQLIFTILVGYILIQFFFT). The Cytoplasmic portion of the chain corresponds to 297-335 (KKTIVDEKITNKKDNVKQTSPQLLKKVQEIQKKPSQQVS).

It belongs to the BIG1 family. In terms of processing, N-glycosylated.

Its subcellular location is the endoplasmic reticulum membrane. Required for normal beta-1,6-glucan synthesis. The chain is Protein BIG1 (BIG1) from Saccharomyces cerevisiae (strain ATCC 204508 / S288c) (Baker's yeast).